Reading from the N-terminus, the 233-residue chain is Large ribosomal subunit protein uL1 (233 aa).

Belongs to the universal ribosomal protein uL1 family. In terms of assembly, part of the 50S ribosomal subunit.

Binds directly to 23S rRNA. The L1 stalk is quite mobile in the ribosome, and is involved in E site tRNA release. Its function is as follows. Protein L1 is also a translational repressor protein, it controls the translation of the L11 operon by binding to its mRNA. This chain is Large ribosomal subunit protein uL1, found in Rhizobium etli (strain ATCC 51251 / DSM 11541 / JCM 21823 / NBRC 15573 / CFN 42).